The chain runs to 229 residues: Protein GLC8 (229 aa).

Disordered stretches follow at residues 1–21 (MGGI…QQDP), 35–62 (TQKN…EIIG), and 107–229 (QFQD…TKEP). Ser12 carries the phosphoserine modification. Residues 107–117 (QFQDIHIDEPK) are compositionally biased toward basic and acidic residues. Phosphothreonine; by PHO85 is present on Thr118. Residue Ser158 is modified to Phosphoserine. Positions 164–173 (FEIKENKQPD) are enriched in basic and acidic residues. The span at 175–184 (ETNDENDEDS) shows a compositional bias: acidic residues. Ser184 is subject to Phosphoserine. Over residues 185-196 (PEARHKKFEEMR) the composition is skewed to basic and acidic residues.

Phosphorylated by the cyclin-CDKs PCL6-PHO85 and PCL7-PHO85. Phosphorylation of Thr-118 inactivates GLC8.

Its function is as follows. Modulator of GLC7 type-1 protein phosphatase. The chain is Protein GLC8 (GLC8) from Saccharomyces cerevisiae (strain ATCC 204508 / S288c) (Baker's yeast).